The chain runs to 618 residues: Chaperone protein HscA homolog (618 aa).

This sequence belongs to the heat shock protein 70 family.

Its function is as follows. Chaperone involved in the maturation of iron-sulfur cluster-containing proteins. Has a low intrinsic ATPase activity which is markedly stimulated by HscB. The protein is Chaperone protein HscA homolog of Methylibium petroleiphilum (strain ATCC BAA-1232 / LMG 22953 / PM1).